The chain runs to 244 residues: Lipoprotein-releasing system ATP-binding protein LolD (244 aa).

An ABC transporter domain is found at 19 to 244 (IRAEALAKTY…KLRELAPSAV (226 aa)). 55–62 (GASGAGKS) contributes to the ATP binding site.

Belongs to the ABC transporter superfamily. Lipoprotein translocase (TC 3.A.1.125) family. The complex is composed of two ATP-binding proteins (LolD) and two transmembrane proteins (LolC and LolE).

It localises to the cell inner membrane. In terms of biological role, part of the ABC transporter complex LolCDE involved in the translocation of mature outer membrane-directed lipoproteins, from the inner membrane to the periplasmic chaperone, LolA. Responsible for the formation of the LolA-lipoprotein complex in an ATP-dependent manner. This is Lipoprotein-releasing system ATP-binding protein LolD from Xanthomonas euvesicatoria pv. vesicatoria (strain 85-10) (Xanthomonas campestris pv. vesicatoria).